The sequence spans 548 residues: Probable malate:quinone oxidoreductase (548 aa).

The disordered stretch occupies residues aspartate 521 to leucine 548. Over residues proline 530–lysine 541 the composition is skewed to low complexity.

This sequence belongs to the MQO family. FAD serves as cofactor.

It catalyses the reaction (S)-malate + a quinone = a quinol + oxaloacetate. Its pathway is carbohydrate metabolism; tricarboxylic acid cycle; oxaloacetate from (S)-malate (quinone route): step 1/1. The polypeptide is Probable malate:quinone oxidoreductase (Escherichia coli (strain 55989 / EAEC)).